Reading from the N-terminus, the 1097-residue chain is U3 small nucleolar RNA-associated protein 22 (1097 aa).

Composition is skewed to basic and acidic residues over residues 1–10 (MNGLKREHES) and 18–27 (KTPETEYDSH). Residues 1–27 (MNGLKREHESSSSQDGSKTPETEYDSH) form a disordered region.

The protein belongs to the NRAP family. In terms of assembly, component of the ribosomal small subunit (SSU) processome.

It is found in the nucleus. The protein localises to the nucleolus. Involved in nucleolar processing of pre-18S ribosomal RNA and ribosome assembly. The sequence is that of U3 small nucleolar RNA-associated protein 22 from Schizosaccharomyces pombe (strain 972 / ATCC 24843) (Fission yeast).